The chain runs to 535 residues: Proto-oncogene tyrosine-protein kinase Src (535 aa).

The tract at residues 1–56 is disordered; it reads MGSNKSKPKDASQRRRSLEPSENVHGAGGAFPASQTPSKPASADGHRGPSAAFVPP. The N-myristoyl glycine moiety is linked to residue Gly2. The span at 7-19 shows a compositional bias: basic and acidic residues; that stretch reads KPKDASQRRRSLE. 3 positions are modified to phosphoserine: Ser17, Ser21, and Ser74. Residues 83–144 form the SH3 domain; it reads GGVTTFVALY…PSNYVAPSDS (62 aa). The SH2 domain maps to 150–247; that stretch reads WYFGKITRRE…GLCHRLTTVC (98 aa). Phosphotyrosine is present on Tyr186. Residues 269 to 522 enclose the Protein kinase domain; sequence LRLEVKLGQG…YLQAFLEDYF (254 aa). ATP-binding positions include 275–283 and Lys297; that span reads LGQGCFGEV. Asp388 acts as the Proton acceptor in catalysis. At Tyr418 the chain carries Phosphotyrosine; by autocatalysis. Residue Tyr418 is modified to Phosphotyrosine; by FAK2. Tyr529 is subject to Phosphotyrosine; by CSK.

This sequence belongs to the protein kinase superfamily. Tyr protein kinase family. SRC subfamily. Part of a complex comprised of PTPRA, BCAR1, BCAR3 (via SH2 domain) and SRC; the formation of the complex is dependent on integrin mediated-tyrosine phosphorylation of PTPRA. Interacts with CDCP1, TGFB1I1 and TOM1L2. Interacts with DDEF1/ASAP1 via its SH3 domain. Interacts with CCPG1. Interacts with the cytoplasmic domain of MUC1, phosphorylates it and increases binding of MUC1 with beta-catenin. Interacts with RALGPS1 via its SH3 domain. Interacts with CAV2 (tyrosine phosphorylated form). Interacts (via the SH3 domain and the protein kinase domain) with ARRB1; the interaction is independent of the phosphorylation state of SRC C-terminus. Interacts with FCAMR and PXN. Interacts with ARRB2. Interacts with ARRB1. Interacts with SRCIN1. Interacts with NDFIP2 and more weakly with NDFIP1. Interacts with PIK3CA and/or PIK3C2B, PTK2/FAK1, ESR1 (dimethylated on arginine) and FAK. Interacts (via SH2 and SH3 domain) with TNK2. Interacts (via protein kinase domain) with the tyrosine phosphorylated form of RUNX3 (via runt domain). Interacts with TRAF3 (via RING-type zinc finger domain). Interacts with RIGI, MAVS and TBK1. Interacts (via SH2 domain) with RACK1; the interaction is enhanced by tyrosine phosphorylation of RACK1 and inhibits SRC activity. Interacts (via SH2 domain) with the 'Tyr-402' phosphorylated form of PTK2B/PYK2. Interacts (via SH2 domain) with FLT3 (tyrosine phosphorylated). Identified in a complex containing FGFR4, NCAM1, CDH2, PLCG1, FRS2, SRC, SHC1, GAP43 and CTTN. Interacts with EPHB1; activates the MAPK/ERK cascade to regulate cell migration. Interacts with ERBB2 and STAT1. Interacts with PDGFRA (tyrosine phosphorylated). Interacts with CSF1R. Interacts (via SH2 domain) with the 'Tyr-9' phosphorylated form of PDPK1. Interacts with DDR2. Interacts with AMOTL2; this interaction regulates the translocation of phosphorylated SRC to peripheral cell-matrix adhesion sites. Interacts with DDR1 and DAB2. Interacts with TRAP1. Interacts with CBLC; the interaction is enhanced when SRC is phosphorylated at 'Tyr-424'. Interacts with ARHGEF5. Interacts (via cytoplasmic domain) with CEACAM1 (via SH2 domain); this interaction is regulated by trans-homophilic cell adhesion. Interacts with MPP2. Interacts with PRR7. Interacts (via kinase domain and to a lesser extent the SH2 domain) directly with PDLIM4; this interaction results in PTPN13-mediated dephosphorylation of this protein leading to its inactivation. Interacts with P85 (PIK3R1 or PIK3R2). Interacts with HNRNPA2B1. Interacts with IL6ST/gp130. Interacts (via SH3 domain) with PELP1 in the presence of 17-beta-estradiol. Interacts with AMBRA1. Myristoylated at Gly-2, and this is essential for targeting to membranes. Post-translationally, dephosphorylated at Tyr-529 by PTPRJ. Phosphorylated on Tyr-529 by c-Src kinase (CSK). The phosphorylated form is termed pp60c-src. Dephosphorylated by PTPRJ at Tyr-418. Normally maintained in an inactive conformation with the SH2 domain engaged with Tyr-529, the SH3 domain engaged with the SH2-kinase linker, and Tyr-418 dephosphorylated. Dephosphorylation of Tyr-529 as a result of protein tyrosine phosphatase (PTP) action disrupts the intramolecular interaction between the SH2 domain and Tyr-529, Tyr-418 can then become autophosphorylated, resulting in SRC activation. Phosphorylation of Tyr-529 by CSK allows this interaction to reform, resulting in SRC inactivation. CDK5-mediated phosphorylation at Ser-74 targets SRC to ubiquitin-dependent degradation and thus leads to cytoskeletal reorganization. Phosphorylated by PTK2/FAK1; this enhances kinase activity. Phosphorylated by PTK2B/PYK2; this enhances kinase activity. Upon activation of IL6ST by IL6, Tyr-418 is phosphorylated and Tyr-529 dephosphorylated. In terms of processing, displays reduced levels of autophosphorylation at Tyr-418 compared to isoform 2. Displays enhanced levels of autophosphorylation at Tyr-418 compared to isoform 1. Post-translationally, S-nitrosylation is important for activation of its kinase activity. In terms of processing, ubiquitinated in response to CDK5-mediated phosphorylation. Ubiquitination mediated by CBLC requires SRC autophosphorylation at Tyr-418 and may lead to lysosomal degradation.

The protein resides in the cell membrane. It is found in the mitochondrion inner membrane. Its subcellular location is the nucleus. It localises to the cytoplasm. The protein localises to the cytoskeleton. The protein resides in the perinuclear region. It is found in the cell junction. Its subcellular location is the focal adhesion. It carries out the reaction L-tyrosyl-[protein] + ATP = O-phospho-L-tyrosyl-[protein] + ADP + H(+). With respect to regulation, phosphorylation by CSK at Tyr-529 inhibits kinase activity. Inhibitory phosphorylation at Tyr-529 is enhanced by heme. Further phosphorylation by CDK1 partially reactivates CSK-inactivated SRC and facilitates complete reactivation by protein tyrosine phosphatase PTPRC. Integrin engagement stimulates kinase activity. Phosphorylation by PTK2/FAK1 enhances kinase activity. Butein and pseudosubstrate-based peptide inhibitors like CIYKYYF act as inhibitors. Phosphorylation at Tyr-418 increases kinase activity. Its function is as follows. Non-receptor protein tyrosine kinase which is activated following engagement of many different classes of cellular receptors including immune response receptors, integrins and other adhesion receptors, receptor protein tyrosine kinases, G protein-coupled receptors as well as cytokine receptors. Participates in signaling pathways that control a diverse spectrum of biological activities including gene transcription, immune response, cell adhesion, cell cycle progression, apoptosis, migration, and transformation. Due to functional redundancy between members of the SRC kinase family, identification of the specific role of each SRC kinase is very difficult. SRC appears to be one of the primary kinases activated following engagement of receptors and plays a role in the activation of other protein tyrosine kinase (PTK) families. Receptor clustering or dimerization leads to recruitment of SRC to the receptor complexes where it phosphorylates the tyrosine residues within the receptor cytoplasmic domains. Plays an important role in the regulation of cytoskeletal organization through phosphorylation of specific substrates such as AFAP1. Phosphorylation of AFAP1 allows the SRC SH2 domain to bind AFAP1 and to localize to actin filaments. Cytoskeletal reorganization is also controlled through the phosphorylation of cortactin (CTTN). When cells adhere via focal adhesions to the extracellular matrix, signals are transmitted by integrins into the cell resulting in tyrosine phosphorylation of a number of focal adhesion proteins, including PTK2/FAK1 and paxillin (PXN). In addition to phosphorylating focal adhesion proteins, SRC is also active at the sites of cell-cell contact adherens junctions and phosphorylates substrates such as beta-catenin (CTNNB1), delta-catenin (CTNND1), and plakoglobin (JUP). Another type of cell-cell junction, the gap junction, is also a target for SRC, which phosphorylates connexin-43 (GJA1). SRC is implicated in regulation of pre-mRNA-processing and phosphorylates RNA-binding proteins such as KHDRBS1. Phosphorylates PKP3 at 'Tyr-195' in response to reactive oxygen species, which may cause the release of PKP3 from desmosome cell junctions into the cytoplasm. Also plays a role in PDGF-mediated tyrosine phosphorylation of both STAT1 and STAT3, leading to increased DNA binding activity of these transcription factors. Involved in the RAS pathway through phosphorylation of RASA1 and RASGRF1. Plays a role in EGF-mediated calcium-activated chloride channel activation. Required for epidermal growth factor receptor (EGFR) internalization through phosphorylation of clathrin heavy chain (CLTC and CLTCL1) at 'Tyr-1477'. Involved in beta-arrestin (ARRB1 and ARRB2) desensitization through phosphorylation and activation of GRK2, leading to beta-arrestin phosphorylation and internalization. Has a critical role in the stimulation of the CDK20/MAPK3 mitogen-activated protein kinase cascade by epidermal growth factor. Might be involved not only in mediating the transduction of mitogenic signals at the level of the plasma membrane but also in controlling progression through the cell cycle via interaction with regulatory proteins in the nucleus. Plays an important role in osteoclastic bone resorption in conjunction with PTK2B/PYK2. Both the formation of a SRC-PTK2B/PYK2 complex and SRC kinase activity are necessary for this function. Recruited to activated integrins by PTK2B/PYK2, thereby phosphorylating CBL, which in turn induces the activation and recruitment of phosphatidylinositol 3-kinase to the cell membrane in a signaling pathway that is critical for osteoclast function. Promotes energy production in osteoclasts by activating mitochondrial cytochrome C oxidase. Phosphorylates DDR2 on tyrosine residues, thereby promoting its subsequent autophosphorylation. Phosphorylates RUNX3 and COX2 on tyrosine residues, TNK2 on 'Tyr-284' and CBL on 'Tyr-738'. Enhances RIGI-elicited antiviral signaling. Phosphorylates PDPK1 at 'Tyr-9', 'Tyr-373' and 'Tyr-376'. Phosphorylates BCAR1 at 'Tyr-226'. Phosphorylates CBLC at multiple tyrosine residues, phosphorylation at 'Tyr-341' activates CBLC E3 activity. Phosphorylates synaptic vesicle protein synaptophysin (SYP). Involved in anchorage-independent cell growth. Required for podosome formation. Mediates IL6 signaling by activating YAP1-NOTCH pathway to induce inflammation-induced epithelial regeneration. Phosphorylates OTUB1, promoting deubiquitination of RPTOR. Non-receptor protein tyrosine kinase which phosphorylates synaptophysin with high affinity. In terms of biological role, non-receptor protein tyrosine kinase which shows higher basal kinase activity than isoform 1, possibly due to weakened intramolecular interactions which enhance autophosphorylation of Tyr-418 and subsequent activation. The SH3 domain shows reduced affinity with the linker sequence between the SH2 and kinase domains which may account for the increased basal activity. Displays altered substrate specificity compared to isoform 1, showing weak affinity for synaptophysin and for peptide substrates containing class I or class II SH3 domain-binding motifs. Plays a role in L1CAM-mediated neurite elongation, possibly by acting downstream of L1CAM to drive cytoskeletal rearrangements involved in neurite outgrowth. The sequence is that of Proto-oncogene tyrosine-protein kinase Src from Mus musculus (Mouse).